The following is a 274-amino-acid chain: tRNA-cytidine(32) 2-sulfurtransferase (274 aa).

The PP-loop motif motif lies at serine 40 to serine 45. Positions 115, 118, and 206 each coordinate [4Fe-4S] cluster.

Belongs to the TtcA family. As to quaternary structure, homodimer. Mg(2+) serves as cofactor. It depends on [4Fe-4S] cluster as a cofactor.

It localises to the cytoplasm. The catalysed reaction is cytidine(32) in tRNA + S-sulfanyl-L-cysteinyl-[cysteine desulfurase] + AH2 + ATP = 2-thiocytidine(32) in tRNA + L-cysteinyl-[cysteine desulfurase] + A + AMP + diphosphate + H(+). The protein operates within tRNA modification. Functionally, catalyzes the ATP-dependent 2-thiolation of cytidine in position 32 of tRNA, to form 2-thiocytidine (s(2)C32). The sulfur atoms are provided by the cysteine/cysteine desulfurase (IscS) system. The polypeptide is tRNA-cytidine(32) 2-sulfurtransferase (Pseudomonas syringae pv. tomato (strain ATCC BAA-871 / DC3000)).